The chain runs to 168 residues: Transcription elongation factor GreB (168 aa).

This sequence belongs to the GreA/GreB family. GreB subfamily.

Functionally, necessary for efficient RNA polymerase transcription elongation past template-encoded arresting sites. The arresting sites in DNA have the property of trapping a certain fraction of elongating RNA polymerases that pass through, resulting in locked ternary complexes. Cleavage of the nascent transcript by cleavage factors such as GreA or GreB allows the resumption of elongation from the new 3'terminus. GreB releases sequences of up to 9 nucleotides in length. The protein is Transcription elongation factor GreB of Xanthomonas axonopodis pv. citri (strain 306).